Here is a 506-residue protein sequence, read N- to C-terminus: D-alanine--D-alanyl carrier protein ligase (506 aa).

152-153 (TS) is an ATP binding site. Aspartate 197 serves as a coordination point for D-alanine. 292-297 (NTYGPT) is an ATP binding site. Valine 301 is a D-alanine binding site. Residues aspartate 383, 395 to 398 (YRGR), and lysine 494 each bind ATP. Lysine 494 is a D-alanine binding site.

This sequence belongs to the ATP-dependent AMP-binding enzyme family. DltA subfamily.

The protein localises to the cytoplasm. The enzyme catalyses holo-[D-alanyl-carrier protein] + D-alanine + ATP = D-alanyl-[D-alanyl-carrier protein] + AMP + diphosphate. It functions in the pathway cell wall biogenesis; lipoteichoic acid biosynthesis. Its function is as follows. Catalyzes the first step in the D-alanylation of lipoteichoic acid (LTA), the activation of D-alanine and its transfer onto the D-alanyl carrier protein (Dcp) DltC. In an ATP-dependent two-step reaction, forms a high energy D-alanyl-AMP intermediate, followed by transfer of the D-alanyl residue as a thiol ester to the phosphopantheinyl prosthetic group of the Dcp. D-alanylation of LTA plays an important role in modulating the properties of the cell wall in Gram-positive bacteria, influencing the net charge of the cell wall. The sequence is that of D-alanine--D-alanyl carrier protein ligase from Lacticaseibacillus casei (strain BL23) (Lactobacillus casei).